The chain runs to 1134 residues: Error-prone DNA polymerase (1134 aa).

Residues Met1–Gln33 form a disordered region.

The protein belongs to the DNA polymerase type-C family. DnaE2 subfamily.

The protein localises to the cytoplasm. The catalysed reaction is DNA(n) + a 2'-deoxyribonucleoside 5'-triphosphate = DNA(n+1) + diphosphate. In terms of biological role, DNA polymerase involved in damage-induced mutagenesis and translesion synthesis (TLS). It is not the major replicative DNA polymerase. The sequence is that of Error-prone DNA polymerase from Cutibacterium acnes (strain DSM 16379 / KPA171202) (Propionibacterium acnes).